The chain runs to 118 residues: Ribulose bisphosphate carboxylase small subunit 2 (118 aa).

This sequence belongs to the RuBisCO small chain family. In terms of assembly, heterohexadecamer of 8 large and 8 small subunits.

Functionally, ruBisCO catalyzes two reactions: the carboxylation of D-ribulose 1,5-bisphosphate, the primary event in carbon dioxide fixation, as well as the oxidative fragmentation of the pentose substrate. Both reactions occur simultaneously and in competition at the same active site. Although the small subunit is not catalytic it is essential for maximal activity. The polypeptide is Ribulose bisphosphate carboxylase small subunit 2 (Acidithiobacillus ferrooxidans (Thiobacillus ferrooxidans)).